A 398-amino-acid polypeptide reads, in one-letter code: 4-hydroxy-3-methylbut-2-en-1-yl diphosphate synthase (ferredoxin) (398 aa).

[4Fe-4S] cluster is bound by residues Cys-306, Cys-309, Cys-340, and Glu-347.

It belongs to the IspG family. Requires [4Fe-4S] cluster as cofactor.

It carries out the reaction (2E)-4-hydroxy-3-methylbut-2-enyl diphosphate + 2 oxidized [2Fe-2S]-[ferredoxin] + H2O = 2-C-methyl-D-erythritol 2,4-cyclic diphosphate + 2 reduced [2Fe-2S]-[ferredoxin] + H(+). It participates in isoprenoid biosynthesis; isopentenyl diphosphate biosynthesis via DXP pathway; isopentenyl diphosphate from 1-deoxy-D-xylulose 5-phosphate: step 5/6. Functionally, converts 2C-methyl-D-erythritol 2,4-cyclodiphosphate (ME-2,4cPP) into 1-hydroxy-2-methyl-2-(E)-butenyl 4-diphosphate. This chain is 4-hydroxy-3-methylbut-2-en-1-yl diphosphate synthase (ferredoxin), found in Parasynechococcus marenigrum (strain WH8102).